The chain runs to 364 residues: Protein trichome birefringence-like 40 (364 aa).

A helical; Signal-anchor for type II membrane protein membrane pass occupies residues 9-25 (LASLSLILFSSFPGLLA). The GDS motif signature appears at 118–120 (GDS). A DCXHWCLPGXXDXWN motif motif is present at residues 341–355 (DCSHWCLPGLPDTWN).

The protein belongs to the PC-esterase family. TBL subfamily.

The protein localises to the membrane. In terms of biological role, may act as a bridging protein that binds pectin and other cell wall polysaccharides. Probably involved in maintaining esterification of pectins. May be involved in the specific O-acetylation of cell wall polymers. In Arabidopsis thaliana (Mouse-ear cress), this protein is Protein trichome birefringence-like 40 (TBL40).